The following is a 433-amino-acid chain: Glutamyl-tRNA reductase (433 aa).

Substrate contacts are provided by residues 49–52 (TCNR), serine 114, 119–121 (EPQ), and glutamine 125. Cysteine 50 (nucleophile) is an active-site residue. 201–206 (GAGETI) is an NADP(+) binding site.

Belongs to the glutamyl-tRNA reductase family. As to quaternary structure, homodimer.

It carries out the reaction (S)-4-amino-5-oxopentanoate + tRNA(Glu) + NADP(+) = L-glutamyl-tRNA(Glu) + NADPH + H(+). It functions in the pathway porphyrin-containing compound metabolism; protoporphyrin-IX biosynthesis; 5-aminolevulinate from L-glutamyl-tRNA(Glu): step 1/2. Its function is as follows. Catalyzes the NADPH-dependent reduction of glutamyl-tRNA(Glu) to glutamate 1-semialdehyde (GSA). The sequence is that of Glutamyl-tRNA reductase from Histophilus somni (strain 2336) (Haemophilus somnus).